A 78-amino-acid chain; its full sequence is Defensin-like protein 141 (78 aa).

An N-terminal signal peptide occupies residues 1-24 (MTKSIISAFFIILILGMMVNEIEG). Intrachain disulfides connect C31–C76, C40–C59, C45–C70, and C49–C72.

The protein belongs to the DEFL family.

Its subcellular location is the secreted. The sequence is that of Defensin-like protein 141 (LCR3) from Arabidopsis thaliana (Mouse-ear cress).